The chain runs to 381 residues: Succinyl-diaminopimelate desuccinylase (381 aa).

Residue H71 participates in Zn(2+) binding. D73 is a catalytic residue. Zn(2+) is bound at residue D104. The active-site Proton acceptor is E138. 3 residues coordinate Zn(2+): E139, E167, and H353.

Belongs to the peptidase M20A family. DapE subfamily. As to quaternary structure, homodimer. Zn(2+) is required as a cofactor. Co(2+) serves as cofactor.

The catalysed reaction is N-succinyl-(2S,6S)-2,6-diaminopimelate + H2O = (2S,6S)-2,6-diaminopimelate + succinate. It participates in amino-acid biosynthesis; L-lysine biosynthesis via DAP pathway; LL-2,6-diaminopimelate from (S)-tetrahydrodipicolinate (succinylase route): step 3/3. Functionally, catalyzes the hydrolysis of N-succinyl-L,L-diaminopimelic acid (SDAP), forming succinate and LL-2,6-diaminopimelate (DAP), an intermediate involved in the bacterial biosynthesis of lysine and meso-diaminopimelic acid, an essential component of bacterial cell walls. This Shewanella halifaxensis (strain HAW-EB4) protein is Succinyl-diaminopimelate desuccinylase.